Here is a 130-residue protein sequence, read N- to C-terminus: uncharacterized protein (130 aa).

Residues 1–100 (MSSNSDNTEC…AEPDAAKEEP (100 aa)) form a disordered region. 2 stretches are compositionally biased toward basic and acidic residues: residues 57-75 (YTTRSKYESDVSEFKKMMD) and 91-100 (AEPDAAKEEP).

This is an uncharacterized protein from Equine herpesvirus 1 (strain Ab4p) (EHV-1).